Reading from the N-terminus, the 334-residue chain is Nucleoid-associated protein YPK_2796 (334 aa).

The protein belongs to the YejK family.

Its subcellular location is the cytoplasm. The protein localises to the nucleoid. This chain is Nucleoid-associated protein YPK_2796, found in Yersinia pseudotuberculosis serotype O:3 (strain YPIII).